We begin with the raw amino-acid sequence, 228 residues long: Imidazole glycerol phosphate synthase subunit HisH (228 aa).

The 215-residue stretch at 4 to 218 (DIAVVDYGMG…VTWNPGEHAS (215 aa)) folds into the Glutamine amidotransferase type-1 domain. Cys-83 acts as the Nucleophile in catalysis. Residues His-193 and Glu-195 contribute to the active site.

In terms of assembly, heterodimer of HisH and HisF.

The protein localises to the cytoplasm. The catalysed reaction is 5-[(5-phospho-1-deoxy-D-ribulos-1-ylimino)methylamino]-1-(5-phospho-beta-D-ribosyl)imidazole-4-carboxamide + L-glutamine = D-erythro-1-(imidazol-4-yl)glycerol 3-phosphate + 5-amino-1-(5-phospho-beta-D-ribosyl)imidazole-4-carboxamide + L-glutamate + H(+). It catalyses the reaction L-glutamine + H2O = L-glutamate + NH4(+). The protein operates within amino-acid biosynthesis; L-histidine biosynthesis; L-histidine from 5-phospho-alpha-D-ribose 1-diphosphate: step 5/9. IGPS catalyzes the conversion of PRFAR and glutamine to IGP, AICAR and glutamate. The HisH subunit catalyzes the hydrolysis of glutamine to glutamate and ammonia as part of the synthesis of IGP and AICAR. The resulting ammonia molecule is channeled to the active site of HisF. The protein is Imidazole glycerol phosphate synthase subunit HisH of Thiobacillus denitrificans (strain ATCC 25259 / T1).